We begin with the raw amino-acid sequence, 200 residues long: Inner membrane-spanning protein YciB (200 aa).

A run of 5 helical transmembrane segments spans residues F32 to V52, V56 to V76, L93 to F113, F126 to W146, and F153 to Q173.

It belongs to the YciB family.

The protein resides in the cell inner membrane. Functionally, plays a role in cell envelope biogenesis, maintenance of cell envelope integrity and membrane homeostasis. This is Inner membrane-spanning protein YciB from Afipia carboxidovorans (strain ATCC 49405 / DSM 1227 / KCTC 32145 / OM5) (Oligotropha carboxidovorans).